A 336-amino-acid polypeptide reads, in one-letter code: Homoserine O-acetyltransferase (336 aa).

An AB hydrolase-1 domain is found at Ala58–Asp321. Ser147 serves as the catalytic Nucleophile. Arg204 contributes to the substrate binding site. Residues Asp286 and His315 contribute to the active site. Asp316 contacts substrate.

The protein belongs to the AB hydrolase superfamily. MetX family. As to quaternary structure, homodimer.

It localises to the cytoplasm. The enzyme catalyses L-homoserine + acetyl-CoA = O-acetyl-L-homoserine + CoA. It participates in amino-acid biosynthesis; L-methionine biosynthesis via de novo pathway; O-acetyl-L-homoserine from L-homoserine: step 1/1. Transfers an acetyl group from acetyl-CoA to L-homoserine, forming acetyl-L-homoserine. This Deinococcus geothermalis (strain DSM 11300 / CIP 105573 / AG-3a) protein is Homoserine O-acetyltransferase.